The sequence spans 207 residues: Phosphatidylinositol phosphate synthase (207 aa).

Helical transmembrane passes span 21-44 (LRAHVTPDVVTWIGTIGAVLMALI) and 50-67 (WLWQGPWLVTLFIFSDSL). 28–31 (DVVT) is a binding site for a CDP-1,2-diacyl-sn-glycerol. Residues Asp-65 and Asp-68 each contribute to the Mg(2+) site. The a CDP-1,2-diacyl-sn-glycerol site is built by Gly-69, Arg-73, and Ser-79. Mg(2+)-binding residues include Asp-86 and Asp-90. A run of 4 helical transmembrane segments spans residues 88–106 (TLDRFGDAAIFTGVALYFA), 112–131 (VLWTAMACAALVFGMATSYV), 152–170 (RLLVSLVAIEITGLARVGA), and 176–195 (VVALPIALCYLTLAGAITVV). Catalysis depends on Asp-90, which acts as the Proton acceptor.

This sequence belongs to the CDP-alcohol phosphatidyltransferase class-I family. In terms of assembly, homodimer. The cofactor is Mg(2+).

Its subcellular location is the cell membrane. It catalyses the reaction a CDP-1,2-diacyl-sn-glycerol + 1D-myo-inositol 3-phosphate = a 1,2-diacyl-sn-glycero-3-phospho-(1D-myo-inositol-3-phosphate) + CMP + H(+). The catalysed reaction is 1,2-di-(9Z-octadecenoyl)-sn-glycero-3-cytidine-5'-diphosphate + 1D-myo-inositol 3-phosphate = 1,2-di-(9Z-octadecenoyl)-sn-glycero-3-phospho-(1D-myo-inositol-3-phosphate) + CMP + H(+). It functions in the pathway phospholipid metabolism; phosphatidylinositol phosphate biosynthesis. Functionally, catalyzes the conjugation of the 1'-hydroxyl group of D-myo-inositol-3-phosphate (also named L-myo-inositol-1-phosphate) with a lipid tail of cytidine diphosphate diacylglycerol (CDP-DAG), forming phosphatidylinositol phosphate (PIP) and CMP. PIP is a precursor of phosphatidylinositol (PI) which is an essential lipid required for cell wall formation. The protein is Phosphatidylinositol phosphate synthase of Cutibacterium acnes (strain DSM 16379 / KPA171202) (Propionibacterium acnes).